The primary structure comprises 341 residues: Binder of USO1 and GRH1 protein 1 (341 aa).

The segment at 1–181 is disordered; the sequence is MSEQESDEVK…AADDLFANDG (181 aa). Residue S2 is modified to N-acetylserine. Positions 2–41 form a coiled coil; that stretch reads SEQESDEVKRMKQLEEARKRVEELKKKKNKKNKGKKNKNS. The segment covering 7 to 26 has biased composition (basic and acidic residues); sequence DEVKRMKQLEEARKRVEELK. Basic residues predominate over residues 27–39; it reads KKKNKKNKGKKNK. Polar residues predominate over residues 69-78; the sequence is KANSTKSENN. Positions 79-91 are enriched in acidic residues; it reads DQNDVDEESEEKE. Position 87 is a phosphoserine (S87). Basic and acidic residues predominate over residues 118–132; sequence GKDDAENTKKEEVQE. Polar residues predominate over residues 158–171; that stretch reads VQTQEGNEPSNTSE. Residue S170 is modified to Phosphoserine. Residues 188-272 are a coiled coil; it reads LTTIKKQKEE…LKLAEAKAAR (85 aa). T292 is subject to Phosphothreonine.

Interacts with GRH1 (via C-terminus), probably forming a heterooligomer consisting of a GRH1 dimer and a BUG1 dimer.

The protein localises to the cytoplasm. Its subcellular location is the golgi apparatus. It is found in the cis-Golgi network membrane. Involved in ER to Golgi vesicle-mediated transport by either facilitating USO1-dependent and -independent tethering or increasing target accuracy of fusion events of COPII-coated vesicles. The polypeptide is Binder of USO1 and GRH1 protein 1 (Saccharomyces cerevisiae (strain ATCC 204508 / S288c) (Baker's yeast)).